We begin with the raw amino-acid sequence, 88 residues long: Centromere protein W (88 aa).

It belongs to the CENP-W/WIP1 family. In terms of assembly, heterodimer with CENPT; this dimer coassembles with CENPS-CENPX heterodimers at centromeres to form the tetrameric CENP-T-W-S-X complex, which is a subcomplex of the large constitutive centromere-associated network (CCAN, also known as the interphase centromere complex or ICEN). Interacts with NPM1. In terms of tissue distribution, highly expressed in ovary, liver, lung and pancreas and to a lower extent in breast and gastrointestinal tract cancers; such as those of the colon, rectum and stomach. Overexpressed in high grade breast invasive tumors. Expressed in many cancer cell types.

The protein resides in the nucleus. Its subcellular location is the chromosome. It localises to the centromere. The protein localises to the kinetochore. It is found in the nucleus matrix. The protein resides in the nucleolus. Component of the CENPA-NAC (nucleosome-associated) complex, a complex that plays a central role in assembly of kinetochore proteins, mitotic progression and chromosome segregation. The CENPA-NAC complex recruits the CENPA-CAD (nucleosome distal) complex and may be involved in incorporation of newly synthesized CENPA into centromeres. Part of a nucleosome-associated complex that binds specifically to histone H3-containing nucleosomes at the centromere, as opposed to nucleosomes containing CENPA. Component of the heterotetrameric CENP-T-W-S-X complex that binds and supercoils DNA, and plays an important role in kinetochore assembly. CENPW has a fundamental role in kinetochore assembly and function. It is one of the inner kinetochore proteins, with most further proteins binding downstream. Required for normal chromosome organization and normal progress through mitosis. The protein is Centromere protein W (CENPW) of Homo sapiens (Human).